The following is a 630-amino-acid chain: Forkhead box protein O (630 aa).

A disordered region spans residues 1–45 (MDGFVQEWSNLPRSDNGLHMDQLVGELPTDGGFEPQTRARSNTWP). Thr43 carries the post-translational modification Phosphothreonine; by PKB/AKT1. The segment at residues 92 to 198 (WGNLSYADLI…ETSRYEKRRG (107 aa)) is a DNA-binding region (fork-head). Position 187 is a phosphoserine; by PKB/AKT1 (Ser187). The disordered stretch occupies residues 214–260 (GLNDATPSPSSSVSEGLDHFPESPLHSGGFQLSPDFRQRASSNASSC). Residues 218–227 (ATPSPSSSVS) show a composition bias toward polar residues. Ser255 carries the phosphoserine; by PKB/AKT1 modification. Residues Ser258, Ser259, and Ser264 each carry the phosphoserine modification. 2 disordered regions span residues 318–379 (SAAS…QQQQ) and 403–432 (TRDGLSPNSVTTTMSPAYPNSEPSSDSLNT). Low complexity-rich tracts occupy residues 332–350 (QQQQQQQQQQAQQQSQLPQ) and 367–379 (QPQAQQQQQQQQQ). Composition is skewed to polar residues over residues 408–417 (SPNSVTTTMS) and 423–432 (SEPSSDSLNT).

In terms of assembly, interacts with melt.

Its subcellular location is the cytoplasm. It localises to the nucleus. In terms of biological role, transcription factor involved in the regulation of the insulin signaling pathway. Consistently activates both the downstream target Thor\d4EBP and the feedback control target InR. Involved in negative regulation of the cell cycle, modulating cell growth and proliferation. In response to cellular stresses, such as nutrient deprivation or increased levels of reactive oxygen species, foxo is activated and inhibits growth through the action of target genes such as Thor. Foxo activated in the adult fat body can regulate lifespan in adults; an insulin peptide itself may function as one secondary messenger of insulin-regulated aging. Also regulates Lip4, homolog of human acid lipases, thereby acting as a key modulator of lipid metabolism by insulin signaling and integrates insulin responses to glucose and lipid homeostasis. This chain is Forkhead box protein O, found in Drosophila grimshawi (Hawaiian fruit fly).